Here is a 214-residue protein sequence, read N- to C-terminus: Adenylate kinase (214 aa).

10 to 15 contacts ATP; that stretch reads GAGKGT. The tract at residues 30–59 is NMP; the sequence is STGDMLRAAVKAGTPLGLEAKKVMDAGQLV. Residues Thr31, Arg36, 57-59, 85-88, and Gln92 contribute to the AMP site; these read QLV and GFPR. Residues 122–159 form an LID region; the sequence is GRRVHPGSGRVYHIVYNPPKVEGKDDVTGEDLAIRPDD. ATP contacts are provided by residues Arg123 and 132–133; that span reads VY. 2 residues coordinate AMP: Arg156 and Arg167. Gln200 provides a ligand contact to ATP.

Belongs to the adenylate kinase family. Monomer.

It is found in the cytoplasm. The enzyme catalyses AMP + ATP = 2 ADP. The protein operates within purine metabolism; AMP biosynthesis via salvage pathway; AMP from ADP: step 1/1. Catalyzes the reversible transfer of the terminal phosphate group between ATP and AMP. Plays an important role in cellular energy homeostasis and in adenine nucleotide metabolism. In Shewanella loihica (strain ATCC BAA-1088 / PV-4), this protein is Adenylate kinase.